A 1218-amino-acid chain; its full sequence is Coatomer subunit alpha-3 (1218 aa).

WD repeat units lie at residues 7-48, 49-88, 91-132, 133-172, 202-241, 246-285, 288-326, 363-404, and 450-489; these read TKSN…DRFD, EHDG…CLFT, GHLD…AVLT, GHNH…KKTV, GHDR…AWEV, GHMN…GIQT, REHD…PAFS, SLNQ…AGRT, and PLPI…GELQ. Residues 854 to 893 are disordered; that stretch reads AMANGGDGFDAEEGEANEEDGEEGGWDLEDLELPPEAETP. A compositionally biased stretch (acidic residues) spans 862-888; that stretch reads FDAEEGEANEEDGEEGGWDLEDLELPP.

In terms of assembly, oligomeric complex that consists of at least the alpha, beta, beta', gamma, delta, epsilon and zeta subunits.

It is found in the cytoplasm. The protein localises to the golgi apparatus membrane. Its subcellular location is the cytoplasmic vesicle. The protein resides in the COPI-coated vesicle membrane. In terms of biological role, the coatomer is a cytosolic protein complex that binds to dilysine motifs and reversibly associates with Golgi non-clathrin-coated vesicles, which further mediate biosynthetic protein transport from the ER, via the Golgi up to the trans Golgi network. Coatomer complex is required for budding from Golgi membranes, and is essential for the retrograde Golgi-to-ER transport of dilysine-tagged proteins. The protein is Coatomer subunit alpha-3 of Oryza sativa subsp. japonica (Rice).